We begin with the raw amino-acid sequence, 349 residues long: Aquaporin-4 (349 aa).

The next 2 membrane-spanning stretches (helical) occupy residues 92 to 112 (LSES…AATA) and 125 to 147 (AFYH…GGLL). An NPA 1 motif is present at residues 148–150 (NPA). A helical membrane pass occupies residues 167–187 (LIYMSAQYFGAFIASAVVYLI). Residues Asn194 and Asn207 are each glycosylated (N-linked (GlcNAc...) asparagine). The next 2 membrane-spanning stretches (helical) occupy residues 225–245 (GAIF…LSIC) and 256–276 (MFPF…SYSA). The short motif at 281–283 (NPA) is the NPA 2 element. A helical membrane pass occupies residues 314-334 (WLFPYVGALLGGVIYEIFIGI).

This sequence belongs to the MIP/aquaporin (TC 1.A.8) family.

Its subcellular location is the cell membrane. Its function is as follows. Aquaglyceroporin that may modulate the water content and osmolytes during anhydrobiosis. This Milnesium tardigradum (Water bear) protein is Aquaporin-4.